The chain runs to 568 residues: Polyprotein P2A (568 aa).

A run of 2 helical transmembrane segments spans residues 10–30 (KSVM…ISVA) and 41–61 (TLIC…CAVC). The Peptidase S39 domain occupies 129 to 326 (VENSRLQPLE…TVENSELYPD (198 aa)). Residues histidine 176, aspartate 209, and serine 276 each act as for protease activity in the active site. Threonine 339 bears the Phosphothreonine; by host mark. Phosphoserine; by host is present on serine 390. Disordered regions lie at residues 403 to 435 (LNYQ…ESSI) and 469 to 568 (SSQN…ATSK). Composition is skewed to polar residues over residues 419 to 435 (NLSS…ESSI) and 469 to 478 (SSQNSKSSLG). Basic and acidic residues predominate over residues 481-502 (ADRKQKSDRSSSKPEGLKESKR). Polar residues predominate over residues 507–516 (NWQSLTSKPS). Residues 539-549 (KSKRSRTRGKS) show a composition bias toward basic residues. A compositionally biased stretch (polar residues) spans 554–568 (VPASPSPKSGSATSK).

It is found in the host membrane. Its function is as follows. Responsible for cleavages of polyprotein P2A and replicase polyprotein P2AB. Functionally, covalently attached to the 5' extremity of the genomic and subgenomic RNAs. It may serve as a primer for the replicase. This is Polyprotein P2A from Cocksfoot mottle virus (isolate Dactylis glomerata/Norway/CfMV-NO/1995) (CfMV).